Reading from the N-terminus, the 162-residue chain is Phosphopantetheine adenylyltransferase (162 aa).

T9 provides a ligand contact to substrate. ATP-binding positions include 9–10 (TF) and H17. K41, L77, and R91 together coordinate substrate. ATP-binding positions include 92-94 (GLR), E102, and 127-133 (RQAIASK).

Belongs to the bacterial CoaD family. Homohexamer. The cofactor is Mg(2+).

It localises to the cytoplasm. It carries out the reaction (R)-4'-phosphopantetheine + ATP + H(+) = 3'-dephospho-CoA + diphosphate. The protein operates within cofactor biosynthesis; coenzyme A biosynthesis; CoA from (R)-pantothenate: step 4/5. In terms of biological role, reversibly transfers an adenylyl group from ATP to 4'-phosphopantetheine, yielding dephospho-CoA (dPCoA) and pyrophosphate. The protein is Phosphopantetheine adenylyltransferase of Cereibacter sphaeroides (strain ATCC 17029 / ATH 2.4.9) (Rhodobacter sphaeroides).